The following is a 492-amino-acid chain: Xaa-Pro dipeptidase (492 aa).

The residue at position 2 (A2) is an N-acetylalanine. S167 bears the Phosphoserine mark. Residue H255 coordinates a dipeptide. Mn(2+) contacts are provided by D276, D287, and H370. Residue D287 participates in a dipeptide binding. The a dipeptide site is built by H377 and R398. Mn(2+) is bound by residues E412 and E452.

It belongs to the peptidase M24B family. Eukaryotic-type prolidase subfamily. Homodimer. Mn(2+) serves as cofactor.

The enzyme catalyses Xaa-L-Pro dipeptide + H2O = an L-alpha-amino acid + L-proline. Its function is as follows. Dipeptidase that catalyzes the hydrolysis of dipeptides with a prolyl (Xaa-Pro) or hydroxyprolyl residue in the C-terminal position. The preferred dipeptide substrate is Gly-Pro, but other Xaa-Pro dipeptides, such as Ala-Pro, Met-Pro, Phe-Pro, Val-Pro and Leu-Pro, can be cleaved. Plays an important role in collagen metabolism because the high level of iminoacids in collagen. The protein is Xaa-Pro dipeptidase (Pepd) of Rattus norvegicus (Rat).